We begin with the raw amino-acid sequence, 1064 residues long: Valine--tRNA ligase, mitochondrial (1064 aa).

A mitochondrion-targeting transit peptide spans 1–26 (MPHLPLASFRPPFWGLRHSRGLPRFH). Residues 25-65 (FHSVSTQSEPHGSPISRRNREAKQKRLREKQATLETDIAGE) form a disordered region. Basic and acidic residues predominate over residues 42 to 56 (RNREAKQKRLREKQA). Positions 146–156 (PNVTGSLHIGH) match the 'HIGH' region motif. Residues 659–663 (KMSKS) carry the 'KMSKS' region motif. Position 662 (Lys-662) interacts with ATP.

This sequence belongs to the class-I aminoacyl-tRNA synthetase family.

The protein resides in the mitochondrion. The enzyme catalyses tRNA(Val) + L-valine + ATP = L-valyl-tRNA(Val) + AMP + diphosphate. Catalyzes the attachment of valine to tRNA(Val) in a two-step reaction: valine is first activated by ATP to form Val-AMP and then transferred to the acceptor end of tRNA(Val). This Macaca mulatta (Rhesus macaque) protein is Valine--tRNA ligase, mitochondrial (VARS2).